We begin with the raw amino-acid sequence, 179 residues long: Inner membrane-spanning protein YciB (179 aa).

5 consecutive transmembrane segments (helical) span residues 22–42 (IYAATSALIVATAIVLIYSWV), 50–70 (MALITFVLVAVFGGLTLFFHN), 76–96 (WKVTVIYALFAGALLMSQWVM), 121–141 (LAWALFFIVCGLANIYIAFWL), and 149–169 (FKVFGLTALTLIFTLLSGVYI).

This sequence belongs to the YciB family.

Its subcellular location is the cell inner membrane. In terms of biological role, plays a role in cell envelope biogenesis, maintenance of cell envelope integrity and membrane homeostasis. The polypeptide is Inner membrane-spanning protein YciB (Salmonella arizonae (strain ATCC BAA-731 / CDC346-86 / RSK2980)).